We begin with the raw amino-acid sequence, 431 residues long: Glutamyl-tRNA(Gln) amidotransferase subunit A (431 aa).

Active-site charge relay system residues include Lys-55 and Ser-130. The active-site Acyl-ester intermediate is the Ser-154.

The protein belongs to the amidase family. GatA subfamily. Heterotrimer of A, B and C subunits.

It catalyses the reaction L-glutamyl-tRNA(Gln) + L-glutamine + ATP + H2O = L-glutaminyl-tRNA(Gln) + L-glutamate + ADP + phosphate + H(+). Allows the formation of correctly charged Gln-tRNA(Gln) through the transamidation of misacylated Glu-tRNA(Gln) in organisms which lack glutaminyl-tRNA synthetase. The reaction takes place in the presence of glutamine and ATP through an activated gamma-phospho-Glu-tRNA(Gln). The chain is Glutamyl-tRNA(Gln) amidotransferase subunit A from Methanococcus maripaludis (strain C6 / ATCC BAA-1332).